The following is a 231-amino-acid chain: 2-hydroxy-3-keto-5-methylthiopentenyl-1-phosphate phosphatase (231 aa).

It belongs to the HAD-like hydrolase superfamily. MtnX family.

It carries out the reaction 2-hydroxy-5-methylsulfanyl-3-oxopent-1-enyl phosphate + H2O = 1,2-dihydroxy-5-(methylsulfanyl)pent-1-en-3-one + phosphate. It functions in the pathway amino-acid biosynthesis; L-methionine biosynthesis via salvage pathway; L-methionine from S-methyl-5-thio-alpha-D-ribose 1-phosphate: step 4/6. Dephosphorylates 2-hydroxy-3-keto-5-methylthiopentenyl-1-phosphate (HK-MTPenyl-1-P) yielding 1,2-dihydroxy-3-keto-5-methylthiopentene (DHK-MTPene). This chain is 2-hydroxy-3-keto-5-methylthiopentenyl-1-phosphate phosphatase, found in Bacillus pumilus (strain SAFR-032).